The following is a 905-amino-acid chain: Probable cation-transporting ATPase F (905 aa).

3 helical membrane-spanning segments follow: residues 84–104, 248–268, and 283–303; these read EFVD…VGFI, FSKF…GVGL, and ALAV…TLAI. Aspartate 333 serves as the catalytic 4-aspartylphosphate intermediate. Mg(2+) is bound by residues aspartate 643 and aspartate 647. Helical transmembrane passes span 716 to 736, 738 to 758, 778 to 798, 808 to 828, 842 to 862, and 872 to 892; these read ILAA…ILWI, MTTA…AGIM, TLLV…WELD, TAAL…CRSL, WIIL…YLPA, and IDIG…IVVA.

Belongs to the cation transport ATPase (P-type) (TC 3.A.3) family. Type IIA subfamily.

It is found in the cell membrane. The catalysed reaction is ATP + H2O = ADP + phosphate + H(+). This is Probable cation-transporting ATPase F (ctpF) from Mycobacterium bovis (strain ATCC BAA-935 / AF2122/97).